Here is a 251-residue protein sequence, read N- to C-terminus: Esterase mlcF (251 aa).

Catalysis depends on charge relay system residues Ser126, Asp193, and His221.

This sequence belongs to the LovG family.

It catalyses the reaction dihydro-ML-236C-[compactin nonaketide synthase] + H2O = holo-[compactin nonaketide synthase] + dihydro-ML-236C carboxylate + H(+). The protein operates within polyketide biosynthesis. Its function is as follows. Esterase; part of the gene cluster that mediates the biosynthesis of compactin, also known as mevastatin or ML-236B, and which acts as a potent competitive inhibitor of HMG-CoA reductase. Compactin biosynthesis is performed in two stages. The first stage is catalyzed by the nonaketide synthase mlcA, which belongs to type I polyketide synthases and catalyzes the iterative nine-step formation of the polyketide. This PKS stage is completed by the action of dehydrogenase mlcG, which catalyzes the NADPH-dependent reduction of the unsaturated tetra-, penta- and heptaketide intermediates that arise during the mlcA-mediated biosynthesis of the nonaketide chain and leads to dihydro-ML-236C carboxylate. Covalently bound dihydro-ML-236C carboxylate is released from mlcA by the mlcF esterase. Conversion of dihydro-ML-236C carboxylate into ML-236A carboxylate is subsequently performed with the participation of molecular oxygen and P450 monoogygenase mlcC. Finally, mlcH performs the conversion of ML-236A carboxylate to ML-236B/compactin carboxylate through the addition of the side-chain diketide moiety produced by the diketide synthase mlcB. In Penicillium citrinum, this protein is Esterase mlcF.